Reading from the N-terminus, the 428-residue chain is Phosphoribosylamine--glycine ligase (428 aa).

Residues 107–313 (KQVMKTYNIP…LVNVIESLLD (207 aa)) enclose the ATP-grasp domain. 133–194 (VEAEGVPIVI…EEYLEGEELS (62 aa)) lines the ATP pocket. Residues Glu283 and Asn285 each coordinate Mg(2+).

The protein belongs to the GARS family. Mg(2+) serves as cofactor. It depends on Mn(2+) as a cofactor.

The catalysed reaction is 5-phospho-beta-D-ribosylamine + glycine + ATP = N(1)-(5-phospho-beta-D-ribosyl)glycinamide + ADP + phosphate + H(+). It functions in the pathway purine metabolism; IMP biosynthesis via de novo pathway; N(1)-(5-phospho-D-ribosyl)glycinamide from 5-phospho-alpha-D-ribose 1-diphosphate: step 2/2. The chain is Phosphoribosylamine--glycine ligase from Halalkalibacterium halodurans (strain ATCC BAA-125 / DSM 18197 / FERM 7344 / JCM 9153 / C-125) (Bacillus halodurans).